The primary structure comprises 253 residues: Solute carrier family 66 member 2 (253 aa).

The next 6 helical transmembrane spans lie at 7–27 (GWLL…AMVF), 49–69 (FSTY…LFWF), 72–92 (HFES…LLML), 125–145 (FADY…ITYL), 150–170 (ALFV…LGVP), and 214–234 (VCGL…YVFT). In terms of domain architecture, PQ-loop 1 spans 14-80 (HQLVSWGAAG…RHFESPLLWQ (67 aa)). Residues 160–215 (AVLTEAMLGVPQLYRNHRHQSTEGMSIKMVLMWTSGDTFKTAYFLLNGAPLQFSVC) enclose the PQ-loop 2 domain.

Its subcellular location is the membrane. The protein is Solute carrier family 66 member 2 (SLC66A2) of Bos taurus (Bovine).